A 181-amino-acid chain; its full sequence is RNA pyrophosphohydrolase (181 aa).

Positions 6 to 150 constitute a Nudix hydrolase domain; that stretch reads GYRPNVGIII…KCEVYRCALK (145 aa). The Nudix box motif lies at 38 to 59; sequence GGIKEGETPEQAMYRELYEEVG.

The protein belongs to the Nudix hydrolase family. RppH subfamily. Requires a divalent metal cation as cofactor.

In terms of biological role, accelerates the degradation of transcripts by removing pyrophosphate from the 5'-end of triphosphorylated RNA, leading to a more labile monophosphorylated state that can stimulate subsequent ribonuclease cleavage. The protein is RNA pyrophosphohydrolase of Psychromonas ingrahamii (strain DSM 17664 / CCUG 51855 / 37).